Here is a 257-residue protein sequence, read N- to C-terminus: Tryptophan synthase alpha chain (257 aa).

Residues Glu44 and Asp55 each act as proton acceptor in the active site.

Belongs to the TrpA family. As to quaternary structure, tetramer of two alpha and two beta chains.

The catalysed reaction is (1S,2R)-1-C-(indol-3-yl)glycerol 3-phosphate + L-serine = D-glyceraldehyde 3-phosphate + L-tryptophan + H2O. Its pathway is amino-acid biosynthesis; L-tryptophan biosynthesis; L-tryptophan from chorismate: step 5/5. Functionally, the alpha subunit is responsible for the aldol cleavage of indoleglycerol phosphate to indole and glyceraldehyde 3-phosphate. In Chlamydia felis (strain Fe/C-56) (Chlamydophila felis), this protein is Tryptophan synthase alpha chain.